We begin with the raw amino-acid sequence, 295 residues long: Bifunctional protein FolD (295 aa).

Residues 175–177 and I243 contribute to the NADP(+) site; that span reads GVS.

This sequence belongs to the tetrahydrofolate dehydrogenase/cyclohydrolase family. As to quaternary structure, homodimer.

It carries out the reaction (6R)-5,10-methylene-5,6,7,8-tetrahydrofolate + NADP(+) = (6R)-5,10-methenyltetrahydrofolate + NADPH. It catalyses the reaction (6R)-5,10-methenyltetrahydrofolate + H2O = (6R)-10-formyltetrahydrofolate + H(+). It participates in one-carbon metabolism; tetrahydrofolate interconversion. Its function is as follows. Catalyzes the oxidation of 5,10-methylenetetrahydrofolate to 5,10-methenyltetrahydrofolate and then the hydrolysis of 5,10-methenyltetrahydrofolate to 10-formyltetrahydrofolate. In Xylella fastidiosa (strain 9a5c), this protein is Bifunctional protein FolD.